We begin with the raw amino-acid sequence, 145 residues long: Antimicrobial peptide NK-lysin (145 aa).

A signal peptide spans 1 to 22; that stretch reads MTSRALLLLASALLGTPGLTFS. The propeptide occupies 23–62; it reads GLNPESYDLATAHLSDGEQFCQGLTQEDLQGDLLTERERQ. In terms of domain architecture, Saposin B-type spans 62-142; the sequence is QGIACWSCRK…VDIKLCKHKA (81 aa). Disulfide bonds link Cys-66–Cys-138, Cys-69–Cys-132, and Cys-97–Cys-107. The propeptide occupies 141 to 145; sequence KAGLI.

It is found in the secreted. In terms of biological role, may be an effector molecule of cytotoxic activity. Has antimicrobial activity. This is Antimicrobial peptide NK-lysin (NKL) from Equus caballus (Horse).